The sequence spans 216 residues: MENILKELKFDDRGLIPVITQDYKTNEVLMMAYIMKRPLKKSLETGKVHYFSRSRNKLWLKGETSGHFQLIKSISIDCDADTLLIKVEQVEAACHTGHYSCFYREISGNELKETSDKVFDEQKVYEAENAKILQEIYDVIVDRTIHPKEGSYTNYLFEKGLDKILKKVGEEAAEVIIGAKNRDKGEIVYEISDLIYHLLVLMVERGIKLEDIYEEA.

Residues 1–132 (MENILKELKF…KVYEAENAKI (132 aa)) form a phosphoribosyl-AMP cyclohydrolase region. The interval 133-216 (LQEIYDVIVD…IKLEDIYEEA (84 aa)) is phosphoribosyl-ATP pyrophosphohydrolase.

It in the N-terminal section; belongs to the PRA-CH family. In the C-terminal section; belongs to the PRA-PH family.

Its subcellular location is the cytoplasm. The enzyme catalyses 1-(5-phospho-beta-D-ribosyl)-ATP + H2O = 1-(5-phospho-beta-D-ribosyl)-5'-AMP + diphosphate + H(+). The catalysed reaction is 1-(5-phospho-beta-D-ribosyl)-5'-AMP + H2O = 1-(5-phospho-beta-D-ribosyl)-5-[(5-phospho-beta-D-ribosylamino)methylideneamino]imidazole-4-carboxamide. The protein operates within amino-acid biosynthesis; L-histidine biosynthesis; L-histidine from 5-phospho-alpha-D-ribose 1-diphosphate: step 2/9. It participates in amino-acid biosynthesis; L-histidine biosynthesis; L-histidine from 5-phospho-alpha-D-ribose 1-diphosphate: step 3/9. In Thermoanaerobacter pseudethanolicus (strain ATCC 33223 / 39E) (Clostridium thermohydrosulfuricum), this protein is Histidine biosynthesis bifunctional protein HisIE (hisI).